We begin with the raw amino-acid sequence, 156 residues long: Bursicon (156 aa).

An N-terminal signal peptide occupies residues 1–26 (MYALDFLFIAFVYFAACHIQEKPVRA). 5 cysteine pairs are disulfide-bonded: Cys-37/Cys-86, Cys-51/Cys-100, Cys-61/Cys-121, Cys-65/Cys-123, and Cys-83/Cys-126. The 91-residue stretch at 37–127 (CQMTPVIHIL…PLECMCRPCG (91 aa)) folds into the CTCK domain.

In terms of assembly, heterodimer of burs and pburs.

It is found in the secreted. In terms of biological role, final heterodimeric neurohormone released at the end of the molting cycle, involved in the sclerotization (tanning) of the insect cuticle, melanization and wing spreading. The protein is Bursicon of Manduca sexta (Tobacco hawkmoth).